Reading from the N-terminus, the 162-residue chain is Probable metalloprotease y4jG (162 aa).

Residues 9–147 form the MPN domain; it reads TVALPRDCVS…YRLDAKANWN (139 aa). Residues His-94, His-96, and Asp-107 each coordinate Zn(2+).

This sequence belongs to the peptidase M67B family.

This Sinorhizobium fredii (strain NBRC 101917 / NGR234) protein is Probable metalloprotease y4jG.